The sequence spans 637 residues: PTS system mannitol-specific EIICBA component (637 aa).

Residues methionine 1–asparagine 23 lie on the Cytoplasmic side of the membrane. The 330-residue stretch at phenylalanine 12–glutamate 341 folds into the PTS EIIC type-2 domain. A helical transmembrane segment spans residues isoleucine 24–asparagine 45. At glutamate 46–alanine 49 the chain is on the periplasmic side. A helical membrane pass occupies residues lysine 50–lysine 70. The Cytoplasmic segment spans residues leucine 71–phenylalanine 133. A helical membrane pass occupies residues serine 134–glutamate 155. Residues alanine 156–glycine 164 are Periplasmic-facing. The chain crosses the membrane as a helical span at residues valine 165 to lysine 185. The Cytoplasmic segment spans residues isoleucine 186–alanine 272. Residues valine 273 to valine 292 form a helical membrane-spanning segment. Topologically, residues serine 293–tyrosine 312 are periplasmic. A helical transmembrane segment spans residues phenylalanine 313–leucine 334. Residues lysine 335 to lysine 637 are Cytoplasmic-facing. Residues arginine 378–alanine 473 form the PTS EIIB type-2 domain. Cysteine 384 (phosphocysteine intermediate; for EIIB activity) is an active-site residue. Cysteine 384 carries the post-translational modification Phosphocysteine; by EIIA. In terms of domain architecture, PTS EIIA type-2 spans phenylalanine 494 to arginine 636. The Tele-phosphohistidine intermediate; for EIIA activity role is filled by histidine 554. Histidine 554 carries the post-translational modification Phosphohistidine; by HPr.

In terms of assembly, homodimer. An intramolecular phosphotransfer takes places between His-554 and Cys-384.

Its subcellular location is the cell inner membrane. The catalysed reaction is D-mannitol(out) + N(pros)-phospho-L-histidyl-[protein] = D-mannitol 1-phosphate(in) + L-histidyl-[protein]. Its function is as follows. The phosphoenolpyruvate-dependent sugar phosphotransferase system (sugar PTS), a major carbohydrate active transport system, catalyzes the phosphorylation of incoming sugar substrates concomitantly with their translocation across the cell membrane. This system is involved in D-mannitol transport. Also able to use D-mannonic acid. This chain is PTS system mannitol-specific EIICBA component, found in Escherichia coli (strain K12).